A 484-amino-acid polypeptide reads, in one-letter code: Tribbles (484 aa).

Polar residues predominate over residues 1-23 (MDNSSGQNSRTASSASTSKIVNY). Residues 1-51 (MDNSSGQNSRTASSASTSKIVNYSSPVSPGVAAATSSSSSSSSSGMSSSQE) are disordered. Residues 24 to 49 (SSPVSPGVAAATSSSSSSSSSGMSSS) are compositionally biased toward low complexity. Residues 129–397 (YRHLVDLTAS…ASHIFLTPWL (269 aa)) form the Protein kinase domain. Composition is skewed to acidic residues over residues 420 to 437 (AEEDEGTAADAMDDDEEG) and 475 to 484 (PEPDTDVDMG). Disordered stretches follow at residues 420–443 (AEEDEGTAADAMDDDEEGLCPLGD) and 464–484 (MAQNANGLSTEPEPDTDVDMG).

It belongs to the protein kinase superfamily. CAMK Ser/Thr protein kinase family. Tribbles subfamily. Interacts with slbo. Interacts with Akt1. Expressed throughout the brain with highest levels of expression detected in the cell body rind and lower levels of expression detected in the neurophil (at protein level).

It is found in the nucleus. Its subcellular location is the cytoplasm. The protein resides in the cell cortex. In terms of biological role, adapter protein that negatively regulates different signaling pathways to coordinate cell differentiation, proliferation, migration and growth. Functions by binding to key regulatory proteins and either blocks their activity or regulates their turnover by the proteasome. In various developing tissues functions as a cell cycle regulator that mediates cell proliferation according to the requirements of the developmental program. Acts by inducing the proteasomal degradation of the CD25 mitotic activators stg and twe at critical stages of development to delay entry into mitosis and thus mediate cell proliferation. During gastrulation, negatively regulates stg to delay mitosis in the ventral region of the embryonic mesoderm thus allowing invagination to be completed before cell division takes place. Delaying stg-dependent mitosis during bristle development and in migrating germline pole cells also arrests their cell divisions, whereas in cystocytes it promotes their cell divisions. Involved in the regulation of the mid-blastula transition; promotes the destruction of twe resulting in the cell cycle arrest in G2 of cycle 14 which delays mitosis and thus reduces cell proliferation allowing cell fate specification and morphogenesis to take place. In germline cells, blocks border cell migration during oogenesis by binding to slbo/C/EBP and promoting its ubiquitination and degradation by the proteasome. May function in a negative feedback loop with slbo to coordinate proper border cell migration. During tissue growth negatively regulates insulin signaling by binding to Akt1 and blocking its phosphorylation-dependent activation. However it may also function downstream in the insulin signaling pathway, acting with Akt1 to direct foxo degradation. Essential for the proper formation of operant place and aversive olfactory memories. The sequence is that of Tribbles from Drosophila melanogaster (Fruit fly).